The sequence spans 195 residues: Apoptosis-associated speck-like protein containing a CARD (195 aa).

In terms of domain architecture, Pyrin spans 1–91 (MGRARDAILD…AGQLQAATHQ (91 aa)). Glycyl lysine isopeptide (Lys-Gly) (interchain with G-Cter in ubiquitin) cross-links involve residues lysine 55 and lysine 174. In terms of domain architecture, CARD spans 107 to 195 (AAKPGLHFID…SYLVEDLERS (89 aa)). A Phosphoserine modification is found at serine 195.

In terms of assembly, self-associates; enforced oligomerization induces apoptosis, NF-kappa-B regulation and interleukin-1 beta secretion. Homooligomers can form disk-like particles of approximately 12 nm diameter and approximately 1 nm height. Next to isoform 1, also isoform 2 and isoform 3 may be involved in oligomerization leading to functional regulation. Component of several inflammasomes containing one pattern recognition receptor/sensor, such as NLRP1, NLRP2, NLRP3, NLRP6, NLRC4, AIM2, MEFV or NOD2, and probably NLRC4, NLRP12 or IFI16. Major component of the ASC pyroptosome, a 1-2 um supramolecular assembly (one per macrophage cell) which consists of oligomerized PYCARD dimers and CASP1. Interacts with CASP1 (precursor form); the interaction induces activation of CASP1 leading to the processing of interleukin-1 beta; PYCARD competes with RIPK2 for binding to CASP1. Interacts with NLRP3; the interaction requires the homooligomerization of NLRP3. Interacts with NLRP2, NLRC4, MEFV, CARD16, AIM2, IFI16, NOD2, RIGI, RIPK2, PYDC1, PYDC2, NLRP10, CASP8, CHUK, IKBKB and BAX. Component of the AIM2 PANoptosome complex, a multiprotein complex that drives inflammatory cell death (PANoptosis). Phosphorylated. In terms of processing, 'Lys-63'-linked polyubiquitination by TRAF3 is critical for speck formation and inflammasome activation. 'Lys-63'-linked deubiquitinated by USP50; a crucial step for NLRP3-mediated inflammasome activation. 'Lys-63'-linked polyubiquitination by PELI1 is also critical for speck formation and inflammasome activation. Deubiquitinated by USP3 that cleaves 'Lys-48'-linked ubiquitin chains and strengthens its stability by blocking proteasomal degradation. As to expression, widely expressed at low levels. Detected in peripheral blood leukocytes, lung, small intestine, spleen, thymus, colon and at lower levels in placenta, liver and kidney. Very low expression in skeletal muscle, heart and brain. Expressed in lung epithelial cells (at protein level). Detected in the leukemia cell lines HL-60 and U-937, but not in Jurkat T-cell lymphoma and Daudi Burkitt's lymphoma. Detected in the melanoma cell line WM35, but not in WM793. Not detected in HeLa cervical carcinoma cells and MOLT-4 lymphocytic leukemia cells.

The protein resides in the cytoplasm. The protein localises to the inflammasome. It is found in the endoplasmic reticulum. It localises to the mitochondrion. Its subcellular location is the nucleus. The protein resides in the golgi apparatus membrane. Its function is as follows. Functions as a key mediator in apoptosis and inflammation. Promotes caspase-mediated apoptosis involving predominantly caspase-8 and also caspase-9 in a probable cell type-specific manner. Involved in activation of the mitochondrial apoptotic pathway, promotes caspase-8-dependent proteolytic maturation of BID independently of FADD in certain cell types and also mediates mitochondrial translocation of BAX and activates BAX-dependent apoptosis coupled to activation of caspase-9, -2 and -3. Involved in innate immune response by acting as an integral adapter in the assembly of various inflammasomes (NLRP1, NLRP2, NLRP3, NLRP6, AIM2 and probably IFI16) which recruit and activate caspase-1 leading to processing and secretion of pro-inflammatory cytokines. Caspase-1-dependent inflammation leads to macrophage pyroptosis, a form of cell death. The function as activating adapter in different types of inflammasomes is mediated by the pyrin and CARD domains and their homotypic interactions. Clustered PYCARD nucleates the formation of caspase-1 filaments through the interaction of their respective CARD domains, acting as a platform for of caspase-1 polymerization. In the NLRP1 and NLRC4 inflammasomes seems not be required but facilitates the processing of procaspase-1. In cooperation with NOD2 involved in an inflammasome activated by bacterial muramyl dipeptide leading to caspase-1 activation. May be involved in RIGI-triggered pro-inflammatory responses and inflammasome activation. In collaboration with AIM2 which detects cytosolic double-stranded DNA may also be involved in a caspase-1-independent cell death that involves caspase-8. In adaptive immunity may be involved in maturation of dendritic cells to stimulate T-cell immunity and in cytoskeletal rearrangements coupled to chemotaxis and antigen uptake may be involved in post-transcriptional regulation of the guanine nucleotide exchange factor DOCK2; the latter function is proposed to involve the nuclear form. Also involved in transcriptional activation of cytokines and chemokines independent of the inflammasome; this function may involve AP-1, NF-kappa-B, MAPK and caspase-8 signaling pathways. For regulation of NF-kappa-B activating and inhibiting functions have been reported. Modulates NF-kappa-B induction at the level of the IKK complex by inhibiting kinase activity of CHUK and IKBK. Proposed to compete with RIPK2 for association with CASP1 thereby down-regulating CASP1-mediated RIPK2-dependent NF-kappa-B activation and activating interleukin-1 beta processing. Modulates host resistance to DNA virus infection, probably by inducing the cleavage of and inactivating CGAS in presence of cytoplasmic double-stranded DNA. Functionally, may have a regulating effect on the function as inflammasome adapter. In terms of biological role, seems to inhibit inflammasome-mediated maturation of interleukin-1 beta. The chain is Apoptosis-associated speck-like protein containing a CARD from Homo sapiens (Human).